Consider the following 794-residue polypeptide: uncharacterized protein (794 aa).

The first 22 residues, 1–22, serve as a signal peptide directing secretion; sequence MKLKYGTIIFSGLLGVSAILAA. C23 carries the N-palmitoyl cysteine lipid modification. C23 is lipidated: S-diacylglycerol cysteine. A compositionally biased stretch (polar residues) spans 177–196; that stretch reads SSGKTQVSQTSSGSNQQKTL. Disordered stretches follow at residues 177-208, 220-257, and 466-506; these read SSGK…SDSS, AKNN…DKKI, and KSTD…ENNS. The segment covering 220-231 has biased composition (low complexity); sequence AKNNGKKANNSK. Residues 238–250 show a composition bias toward polar residues; that stretch reads DQSTQTHNDQGDA.

This sequence belongs to the MG185/MG260 family.

The protein resides in the cell membrane. This is an uncharacterized protein from Mycoplasma pneumoniae (strain ATCC 29342 / M129 / Subtype 1) (Mycoplasmoides pneumoniae).